Here is a 618-residue protein sequence, read N- to C-terminus: DNA mismatch repair protein MutL (618 aa).

Over residues 367–378 (EPTAAREPATPR) the composition is skewed to low complexity. Residues 367 to 402 (EPTAAREPATPRYSGGASGGNGGRQTAGGWPHAQPG) are disordered. A compositionally biased stretch (gly residues) spans 382 to 392 (GASGGNGGRQT).

This sequence belongs to the DNA mismatch repair MutL/HexB family.

This protein is involved in the repair of mismatches in DNA. It is required for dam-dependent methyl-directed DNA mismatch repair. May act as a 'molecular matchmaker', a protein that promotes the formation of a stable complex between two or more DNA-binding proteins in an ATP-dependent manner without itself being part of a final effector complex. The chain is DNA mismatch repair protein MutL from Salmonella choleraesuis (strain SC-B67).